The following is a 558-amino-acid chain: Arginine--tRNA ligase (558 aa).

Positions 116-126 (ANPNGPLHVGH) match the 'HIGH' region motif.

This sequence belongs to the class-I aminoacyl-tRNA synthetase family.

It is found in the cytoplasm. It catalyses the reaction tRNA(Arg) + L-arginine + ATP = L-arginyl-tRNA(Arg) + AMP + diphosphate. The protein is Arginine--tRNA ligase of Methanocorpusculum labreanum (strain ATCC 43576 / DSM 4855 / Z).